The primary structure comprises 196 residues: Anthranilate synthase component 2 (196 aa).

The Glutamine amidotransferase type-1 domain maps to N3–G196. G57–S59 contacts L-glutamine. C84 acts as the Nucleophile; for GATase activity in catalysis. L-glutamine contacts are provided by residues Q88 and S134–L135. Residues H170 and E172 each act as for GATase activity in the active site.

Heterotetramer consisting of two non-identical subunits: a beta subunit (TrpG) and a large alpha subunit (TrpE).

It carries out the reaction chorismate + L-glutamine = anthranilate + pyruvate + L-glutamate + H(+). The protein operates within amino-acid biosynthesis; L-tryptophan biosynthesis; L-tryptophan from chorismate: step 1/5. In terms of biological role, part of a heterotetrameric complex that catalyzes the two-step biosynthesis of anthranilate, an intermediate in the biosynthesis of L-tryptophan. In the first step, the glutamine-binding beta subunit (TrpG) of anthranilate synthase (AS) provides the glutamine amidotransferase activity which generates ammonia as a substrate that, along with chorismate, is used in the second step, catalyzed by the large alpha subunit of AS (TrpE) to produce anthranilate. In the absence of TrpG, TrpE can synthesize anthranilate directly from chorismate and high concentrations of ammonia. This chain is Anthranilate synthase component 2 (trpG), found in Buchnera aphidicola subsp. Schizaphis graminum (strain Sg).